Consider the following 640-residue polypeptide: Acid beta-fructofuranosidase 2, vacuolar (640 aa).

The disordered stretch occupies residues 1-22 (MDTNTTSYTPLPGDPFLSGPPE). Over 1 to 29 (MDTNTTSYTPLPGDPFLSGPPETPRRPLK) the chain is Cytoplasmic. Residues 1 to 78 (MDTNTTSYTP…HPQSTTNTML (78 aa)) constitute a propeptide, removed in mature form. A helical transmembrane segment spans residues 30-49 (GFAVIFASVIFLMSLVALII). The Lumenal portion of the chain corresponds to 50 to 616 (HQGPQQPPDV…FSPDAASHSS (567 aa)). Residues 93–96 (WMND), glutamine 112, tryptophan 120, 155–156 (WT), 219–220 (RD), glutamate 274, and aspartate 307 contribute to the substrate site. Aspartate 96 is an active-site residue. Cysteine 464 and cysteine 512 are oxidised to a cystine. A helical transmembrane segment spans residues 617–639 (FTPVTVFIKFIVPFGIFLTLYFV). A topological domain (cytoplasmic) is located at residue arginine 640.

This sequence belongs to the glycosyl hydrolase 32 family. As to expression, expressed in buds, stems, roots and leaves.

The protein localises to the membrane. It localises to the vacuole membrane. It catalyses the reaction Hydrolysis of terminal non-reducing beta-D-fructofuranoside residues in beta-D-fructofuranosides.. Functionally, vacuolar invertase. This Rosa hybrid cultivar protein is Acid beta-fructofuranosidase 2, vacuolar.